Here is a 438-residue protein sequence, read N- to C-terminus: uncharacterized protein (438 aa).

The FAD-binding PCMH-type domain occupies 23–193 (IHAKPPVVVV…VNATIRLTAA (171 aa)). Residues 55–59 (VRGSG), 60–61 (HS), glutamine 65, aspartate 117, threonine 122, 128–132 (SVGGF), isoleucine 183, tyrosine 393, and 430–433 (APGY) each bind FAD. Residue histidine 60 is modified to Pros-8alpha-FAD histidine.

It belongs to the oxygen-dependent FAD-linked oxidoreductase family. The cofactor is FAD.

Its function is as follows. The FAS-operon encodes genes involved in cytokinin production and in host plant fasciation (leafy gall). This is an uncharacterized protein from Rhodococcoides fascians (Rhodococcus fascians).